The primary structure comprises 445 residues: Probable cytosol aminopeptidase (445 aa).

Mn(2+) contacts are provided by Lys-217 and Asp-222. Residue Lys-229 is part of the active site. Asp-240, Asp-299, and Glu-301 together coordinate Mn(2+). The active site involves Arg-303.

It belongs to the peptidase M17 family. It depends on Mn(2+) as a cofactor.

It is found in the cytoplasm. It catalyses the reaction Release of an N-terminal amino acid, Xaa-|-Yaa-, in which Xaa is preferably Leu, but may be other amino acids including Pro although not Arg or Lys, and Yaa may be Pro. Amino acid amides and methyl esters are also readily hydrolyzed, but rates on arylamides are exceedingly low.. The enzyme catalyses Release of an N-terminal amino acid, preferentially leucine, but not glutamic or aspartic acids.. In terms of biological role, presumably involved in the processing and regular turnover of intracellular proteins. Catalyzes the removal of unsubstituted N-terminal amino acids from various peptides. This is Probable cytosol aminopeptidase (pepA) from Mycoplasma pneumoniae (strain ATCC 29342 / M129 / Subtype 1) (Mycoplasmoides pneumoniae).